The sequence spans 318 residues: Methionyl-tRNA formyltransferase (318 aa).

112–115 (SILP) is a (6S)-5,6,7,8-tetrahydrofolate binding site.

This sequence belongs to the Fmt family.

The catalysed reaction is L-methionyl-tRNA(fMet) + (6R)-10-formyltetrahydrofolate = N-formyl-L-methionyl-tRNA(fMet) + (6S)-5,6,7,8-tetrahydrofolate + H(+). In terms of biological role, attaches a formyl group to the free amino group of methionyl-tRNA(fMet). The formyl group appears to play a dual role in the initiator identity of N-formylmethionyl-tRNA by promoting its recognition by IF2 and preventing the misappropriation of this tRNA by the elongation apparatus. This chain is Methionyl-tRNA formyltransferase, found in Shewanella sp. (strain MR-7).